The chain runs to 185 residues: Pyruvate/ketoisovalerate oxidoreductases common subunit gamma (185 aa).

As to quaternary structure, heterotetramer of one alpha, one beta, one delta and one gamma chain.

It catalyses the reaction 2 oxidized [2Fe-2S]-[ferredoxin] + pyruvate + CoA = 2 reduced [2Fe-2S]-[ferredoxin] + acetyl-CoA + CO2 + H(+). The catalysed reaction is 3-methyl-2-oxobutanoate + 2 oxidized [2Fe-2S]-[ferredoxin] + CoA = 2-methylpropanoyl-CoA + 2 reduced [2Fe-2S]-[ferredoxin] + CO2 + H(+). The sequence is that of Pyruvate/ketoisovalerate oxidoreductases common subunit gamma (porG) from Pyrococcus abyssi (strain GE5 / Orsay).